The sequence spans 271 residues: uncharacterized protein (271 aa).

Residues 77-205 (IIGVYFGDAN…SKELLKKLDV (129 aa)) enclose the DOD-type homing endonuclease domain.

This is an uncharacterized protein from Methanocaldococcus jannaschii (strain ATCC 43067 / DSM 2661 / JAL-1 / JCM 10045 / NBRC 100440) (Methanococcus jannaschii).